Reading from the N-terminus, the 572-residue chain is Mitochondrial distribution and morphology protein 34 (572 aa).

The region spanning 1-195 (MAFNFNWSPL…LPAIIHRLSL (195 aa)) is the SMP-LTD domain. 4 disordered regions span residues 212-236 (TASA…VDAL), 355-426 (GAGR…PDND), 487-507 (HGAS…GSSR), and 552-572 (ACGP…AYGH). A compositionally biased stretch (basic residues) spans 358–370 (RHSKAHARKRKKR). Residues 371–381 (VVDLRRPKTTD) are compositionally biased toward basic and acidic residues. The segment covering 387–400 (SDESSFTESTSAPS) has biased composition (polar residues).

It belongs to the MDM34 family. Component of the ER-mitochondria encounter structure (ERMES) or MDM complex, composed of mmm1, mdm10, mdm12 and mdm34.

It localises to the mitochondrion outer membrane. In terms of biological role, component of the ERMES/MDM complex, which serves as a molecular tether to connect the endoplasmic reticulum (ER) and mitochondria. Components of this complex are involved in the control of mitochondrial shape and protein biogenesis, and function in nonvesicular lipid trafficking between the ER and mitochondria. Mdm34 is required for the interaction of the ER-resident membrane protein mmm1 and the outer mitochondrial membrane-resident beta-barrel protein mdm10. The sequence is that of Mitochondrial distribution and morphology protein 34 from Aspergillus fumigatus (strain ATCC MYA-4609 / CBS 101355 / FGSC A1100 / Af293) (Neosartorya fumigata).